We begin with the raw amino-acid sequence, 606 residues long: tRNA 5-methylaminomethyl-2-thiouridine biosynthesis bifunctional protein MnmC (606 aa).

The segment at Met1–Leu237 is tRNA (mnm(5)s(2)U34)-methyltransferase. An FAD-dependent cmnm(5)s(2)U34 oxidoreductase region spans residues Ile254–Gly606.

It in the N-terminal section; belongs to the methyltransferase superfamily. tRNA (mnm(5)s(2)U34)-methyltransferase family. The protein in the C-terminal section; belongs to the DAO family. The cofactor is FAD.

It is found in the cytoplasm. The enzyme catalyses 5-aminomethyl-2-thiouridine(34) in tRNA + S-adenosyl-L-methionine = 5-methylaminomethyl-2-thiouridine(34) in tRNA + S-adenosyl-L-homocysteine + H(+). Catalyzes the last two steps in the biosynthesis of 5-methylaminomethyl-2-thiouridine (mnm(5)s(2)U) at the wobble position (U34) in tRNA. Catalyzes the FAD-dependent demodification of cmnm(5)s(2)U34 to nm(5)s(2)U34, followed by the transfer of a methyl group from S-adenosyl-L-methionine to nm(5)s(2)U34, to form mnm(5)s(2)U34. In Idiomarina loihiensis (strain ATCC BAA-735 / DSM 15497 / L2-TR), this protein is tRNA 5-methylaminomethyl-2-thiouridine biosynthesis bifunctional protein MnmC.